Consider the following 197-residue polypeptide: dCTP deaminase (197 aa).

Residues 110 to 115, Asp-128, 136 to 138, Tyr-171, and Gln-182 contribute to the dCTP site; these read RSSLAR and VLE. Residue Glu-138 is the Proton donor/acceptor of the active site.

This sequence belongs to the dCTP deaminase family. As to quaternary structure, homotrimer.

The enzyme catalyses dCTP + H2O + H(+) = dUTP + NH4(+). It functions in the pathway pyrimidine metabolism; dUMP biosynthesis; dUMP from dCTP (dUTP route): step 1/2. Its function is as follows. Catalyzes the deamination of dCTP to dUTP. The protein is dCTP deaminase of Alteromonas mediterranea (strain DSM 17117 / CIP 110805 / LMG 28347 / Deep ecotype).